The sequence spans 384 residues: Lipid-A-disaccharide synthase 1 (384 aa).

Belongs to the LpxB family.

The enzyme catalyses a lipid X + a UDP-2-N,3-O-bis[(3R)-3-hydroxyacyl]-alpha-D-glucosamine = a lipid A disaccharide + UDP + H(+). It functions in the pathway bacterial outer membrane biogenesis; LPS lipid A biosynthesis. Condensation of UDP-2,3-diacylglucosamine and 2,3-diacylglucosamine-1-phosphate to form lipid A disaccharide, a precursor of lipid A, a phosphorylated glycolipid that anchors the lipopolysaccharide to the outer membrane of the cell. The chain is Lipid-A-disaccharide synthase 1 from Legionella pneumophila subsp. pneumophila (strain Philadelphia 1 / ATCC 33152 / DSM 7513).